The following is a 344-amino-acid chain: Protein RecA (344 aa).

65 to 72 is a binding site for ATP; the sequence is GPESSGKT.

This sequence belongs to the RecA family.

The protein resides in the cytoplasm. Can catalyze the hydrolysis of ATP in the presence of single-stranded DNA, the ATP-dependent uptake of single-stranded DNA by duplex DNA, and the ATP-dependent hybridization of homologous single-stranded DNAs. It interacts with LexA causing its activation and leading to its autocatalytic cleavage. The protein is Protein RecA of Xanthomonas oryzae pv. oryzae (strain PXO99A).